Reading from the N-terminus, the 241-residue chain is Uracil-DNA glycosylase (241 aa).

The active-site Proton acceptor is D71.

This sequence belongs to the uracil-DNA glycosylase (UDG) superfamily. UNG family.

It localises to the cytoplasm. The enzyme catalyses Hydrolyzes single-stranded DNA or mismatched double-stranded DNA and polynucleotides, releasing free uracil.. Its function is as follows. Excises uracil residues from the DNA which can arise as a result of misincorporation of dUMP residues by DNA polymerase or due to deamination of cytosine. The polypeptide is Uracil-DNA glycosylase (Xanthomonas euvesicatoria pv. vesicatoria (strain 85-10) (Xanthomonas campestris pv. vesicatoria)).